Here is a 95-residue protein sequence, read N- to C-terminus: Pyrimidine/purine nucleoside phosphorylase (95 aa).

Belongs to the nucleoside phosphorylase PpnP family.

The catalysed reaction is a purine D-ribonucleoside + phosphate = a purine nucleobase + alpha-D-ribose 1-phosphate. It catalyses the reaction adenosine + phosphate = alpha-D-ribose 1-phosphate + adenine. The enzyme catalyses cytidine + phosphate = cytosine + alpha-D-ribose 1-phosphate. It carries out the reaction guanosine + phosphate = alpha-D-ribose 1-phosphate + guanine. The catalysed reaction is inosine + phosphate = alpha-D-ribose 1-phosphate + hypoxanthine. It catalyses the reaction thymidine + phosphate = 2-deoxy-alpha-D-ribose 1-phosphate + thymine. The enzyme catalyses uridine + phosphate = alpha-D-ribose 1-phosphate + uracil. It carries out the reaction xanthosine + phosphate = alpha-D-ribose 1-phosphate + xanthine. Its function is as follows. Catalyzes the phosphorolysis of diverse nucleosides, yielding D-ribose 1-phosphate and the respective free bases. Can use uridine, adenosine, guanosine, cytidine, thymidine, inosine and xanthosine as substrates. Also catalyzes the reverse reactions. The sequence is that of Pyrimidine/purine nucleoside phosphorylase from Vibrio cholerae serotype O1 (strain ATCC 39315 / El Tor Inaba N16961).